The sequence spans 419 residues: UDP-N-acetylglucosamine 1-carboxyvinyltransferase (419 aa).

22–23 (KN) contacts phosphoenolpyruvate. Arg-93 contributes to the UDP-N-acetyl-alpha-D-glucosamine binding site. Cys-117 serves as the catalytic Proton donor. Cys-117 carries the post-translational modification 2-(S-cysteinyl)pyruvic acid O-phosphothioketal. Positions 307 and 329 each coordinate UDP-N-acetyl-alpha-D-glucosamine.

This sequence belongs to the EPSP synthase family. MurA subfamily.

The protein localises to the cytoplasm. It carries out the reaction phosphoenolpyruvate + UDP-N-acetyl-alpha-D-glucosamine = UDP-N-acetyl-3-O-(1-carboxyvinyl)-alpha-D-glucosamine + phosphate. Its pathway is cell wall biogenesis; peptidoglycan biosynthesis. Its function is as follows. Cell wall formation. Adds enolpyruvyl to UDP-N-acetylglucosamine. The sequence is that of UDP-N-acetylglucosamine 1-carboxyvinyltransferase from Shewanella frigidimarina (strain NCIMB 400).